The sequence spans 229 residues: Aminodeoxyfutalosine nucleosidase (229 aa).

The Proton acceptor role is filled by Glu13. Substrate-binding positions include Gly79, Ile153, and 173–174 (ME). Asp197 serves as the catalytic Proton donor.

It belongs to the PNP/UDP phosphorylase family. In terms of assembly, homodimer.

The enzyme catalyses 6-amino-6-deoxyfutalosine + H2O = dehypoxanthine futalosine + adenine. It carries out the reaction S-adenosyl-L-homocysteine + H2O = S-(5-deoxy-D-ribos-5-yl)-L-homocysteine + adenine. The catalysed reaction is S-methyl-5'-thioadenosine + H2O = 5-(methylsulfanyl)-D-ribose + adenine. It catalyses the reaction 5'-deoxyadenosine + H2O = 5-deoxy-D-ribose + adenine. The protein operates within quinol/quinone metabolism; menaquinone biosynthesis. Its pathway is amino-acid biosynthesis; L-methionine biosynthesis via salvage pathway; S-methyl-5-thio-alpha-D-ribose 1-phosphate from S-methyl-5'-thioadenosine (hydrolase route): step 1/2. Its function is as follows. Catalyzes the direct conversion of aminodeoxyfutalosine (AFL) into dehypoxanthine futalosine (DHFL) and adenine via the hydrolysis of the N-glycosidic bond; this reaction seems to represent an essential step in the menaquinone biosynthesis pathway in Campylobacter species. Also catalyzes the hydrolysis of 5'-methylthioadenosine (MTA) to adenine and 5'-methylthioribose. Can also probably use S-adenosylhomocysteine (SAH) as substrate, leading to adenine and S-ribosylhomocysteine. These other activities highlight the tremendous versatility of the enzyme, which also plays key roles in S-adenosylmethionine recycling and in the biosynthesis of the quorum-sensing molecule autoinducer-2. Shows negligible activity with futalosine (FL) as substrate. This chain is Aminodeoxyfutalosine nucleosidase (pfs), found in Campylobacter jejuni subsp. jejuni serotype O:2 (strain ATCC 700819 / NCTC 11168).